The primary structure comprises 85 residues: NAD(P)H-quinone oxidoreductase subunit L (85 aa).

2 helical membrane-spanning segments follow: residues 17-37 (IVAV…PGFV) and 54-74 (AFMY…SPFL).

Belongs to the complex I NdhL subunit family. In terms of assembly, NDH-1 can be composed of about 15 different subunits; different subcomplexes with different compositions have been identified which probably have different functions.

Its subcellular location is the cellular thylakoid membrane. The catalysed reaction is a plastoquinone + NADH + (n+1) H(+)(in) = a plastoquinol + NAD(+) + n H(+)(out). The enzyme catalyses a plastoquinone + NADPH + (n+1) H(+)(in) = a plastoquinol + NADP(+) + n H(+)(out). Its function is as follows. NDH-1 shuttles electrons from an unknown electron donor, via FMN and iron-sulfur (Fe-S) centers, to quinones in the respiratory and/or the photosynthetic chain. The immediate electron acceptor for the enzyme in this species is believed to be plastoquinone. Couples the redox reaction to proton translocation, and thus conserves the redox energy in a proton gradient. Cyanobacterial NDH-1 also plays a role in inorganic carbon-concentration. The sequence is that of NAD(P)H-quinone oxidoreductase subunit L from Crocosphaera subtropica (strain ATCC 51142 / BH68) (Cyanothece sp. (strain ATCC 51142)).